The primary structure comprises 347 residues: Ketol-acid reductoisomerase (NADP(+)) (347 aa).

Positions 3–182 (TKMFYDKDID…GSGCAGILET (180 aa)) constitute a KARI N-terminal Rossmann domain. NADP(+) is bound by residues 26-29 (YGAQ), R49, S53, and 83-86 (DELQ). H108 is an active-site residue. NADP(+) is bound at residue G134. Residues 183–328 (TFEEETTEDL…KKVRAMMPWI (146 aa)) enclose the KARI C-terminal knotted domain. Mg(2+) contacts are provided by D191, E195, E227, and E231. S252 provides a ligand contact to substrate.

It belongs to the ketol-acid reductoisomerase family. Requires Mg(2+) as cofactor.

It catalyses the reaction (2R)-2,3-dihydroxy-3-methylbutanoate + NADP(+) = (2S)-2-acetolactate + NADPH + H(+). The enzyme catalyses (2R,3R)-2,3-dihydroxy-3-methylpentanoate + NADP(+) = (S)-2-ethyl-2-hydroxy-3-oxobutanoate + NADPH + H(+). Its pathway is amino-acid biosynthesis; L-isoleucine biosynthesis; L-isoleucine from 2-oxobutanoate: step 2/4. It participates in amino-acid biosynthesis; L-valine biosynthesis; L-valine from pyruvate: step 2/4. Its function is as follows. Involved in the biosynthesis of branched-chain amino acids (BCAA). Catalyzes an alkyl-migration followed by a ketol-acid reduction of (S)-2-acetolactate (S2AL) to yield (R)-2,3-dihydroxy-isovalerate. In the isomerase reaction, S2AL is rearranged via a Mg-dependent methyl migration to produce 3-hydroxy-3-methyl-2-ketobutyrate (HMKB). In the reductase reaction, this 2-ketoacid undergoes a metal-dependent reduction by NADPH to yield (R)-2,3-dihydroxy-isovalerate. The protein is Ketol-acid reductoisomerase (NADP(+)) of Leuconostoc mesenteroides subsp. cremoris.